The chain runs to 2717 residues: MSQPTSVPKLLLHHAVESRDKVAFLGPGWSITYSDLEKRTRLVAAHLARAGIGRGDFVAIVLGRCLEAVESVLAIMRAGAVSVPLDPRSPPADLARVLEHSGARAIITDDRHLATVSAAAVKGSLIIISTTNAQVDVIESLKTERYQDWVEDDGYSTSDVHLDSLGDEEEAFLHYTSGTTSLPKGVLSSQKSALWNVEKVTSVFEFSSEDRFFWPLPLFHILGHSLCILATVAKGASAYLSDPDQLLLDNLLVKDVEDTTFIAGAPATFHELVEAKAASSSTLSLPKLRACMSAGAAASVSLCDQVHELFGVSLLNNYGCTETCGAIAISRPGHVYRQHGSVTPLPDWEIQLMDQDGKQVREGEQGELWVRGPGLMLGYYKETQSPFTEDAWFPTGDTGILTTSDVGKELSLVGRKKELIIRGGENIQPAELEQVLLQHPGVADVAVSGILHGLLGETPAAFIVKETPDLDLDLSSLIATCREALPDYKVPTAFYEIDAVPRTLLGKPKRLAVASYTSKPLTVRSRLQTRAAVEALVLAETAGACGVQAEPGEKESDPDWLRKYADESFSHLGLTSMAGVVLRDRLANLTGLVDLPNTLVFDYSTPAAVRDYLFNRLREQESPLPSKSAPALSLPSKAEPIAIISMACRYPGGISSPEDLWQLVSDEIDATTDFPSDRGWDIDSLYSTDPTEPFTSTTKRGGFLPDFADFDAGLFGMAPREALATDPQQRLLLETTWELAERGGIAPLSLKGTQTGCFIGTLYDDYEANGFGNAELEAHLGLGSSGSVMSGRISYYFGLHGPSIVISTGCSSSLCAVHSAAQALRNEECTLAIAGGITCMASPRPFTMFSKRRGLSADGRCRTYSSDAAGTGWSEGVGLIMLEKLSDAQRNGHRVLGVIRGSAVNSDGTSNGLTAPSGPAQQMCIQSALSQAALSPTDIDVLEGHGTATPLGDPIEVQAVINTYGNGSGNDPRANPLLIGSIKSNIGHTQAAAAVAGIIKMVKSIHHGVAPASLHIREPSRHIDWDGCGVEPLSKAKQWPSVDRARRAAVSSFGIGGTNAHIILEQPDSIEQNGVSTPKNHTIAFPWIISGADENALRAQAQSLLAAWRKSLSHESPSDIAFSLATARSSLKYRAVVTYTAGGDLNDQIETALTALAEDESHPDVVTGHTNTTGNKPRLACLFSGQGSRMPDPSAIEELSTVFPIFSRAFKEACEEVNQYLECPLERALSDSSLLDRTDFAQPALFVFEVAMYRLLESFDVIPDVVSGHSLGEIAAAHISGALTLRDAAIIVTTRSRLMAALDANGGMVSIAAPEQEVAEELSRLGSTAIIAVVNSEKSVVVSGTREAITAVADRFTELGRRTTILRNVNHGFHSPMMNGILGDLEEALASSIGSGTSSKIPLVSTVTGKLAEAAQLTSPQYWTRHVSEPVRFADSVNELRSNERVSVFIEVGPSAVLSPHVPGTVATYGTVGKLLNTLGQIWARGVPVNWQAVFGGVGAHLVDLPVYAFQRRKYWLPYRTLLPAESVGASGASSPGRTSDIGTSTLNHGVLYRTTSIAGTNDIICAGFVSASKQPWLRDHIISGQSLVPATAFAELALRAGRECADPSGSEQVILDELIILAPLALSLEEDDEEQEFEVQVVIKELEDEESTIRRSIDVYSRLHAVSTQPDWVQHATGTLKLISLPPPEKDVFTNGTHDVENSEVDVSKAYAMLEDFGISYGPAFQGVRGGWRQHDNELLVQINPPQDQDSKAGFVLHPALLDAALHAPILAAPEKVSSGQIRLPFSFKGIQVFEAATSTSGPVLARIRDLDDERFSVTITNKATGAAVAEISEVMLRAVQPPVVEGDLYRLKWTELKAAQTTKPNLVDDIFTVQAPRNVDAADIPKAVHNAVSEALRAIQQWRTKKANSSDKIRLIFVTEQASLHPDVNVIDAAVWGFVRSAQTEFGGENIILIDLDGSAESQEALPSAFDCGQEVVALQDGKIMVPTLSKEPPVPSTSTTLDVSGTVLITGGTGGLGAILSRHLVQTCGARNLLLTSRSGIKAAGATELLDELSAQDATVVRIESCDISDRAQLATLLEGNHGHPPITAIIHCAGVVDDGVLTSLTPERISRVLQAKVDAAWNLHQLAPETTRTFVLYSSFVGIVGNEGQAAYTAGNAFLNALARMRVAQGLPAVSLAWGPWANDVGMAAGDKLVIPNLRIASAQPVVDQQGLHLFDRALQTSEPVLVPLLLRGPFPMVPSAAAVTKSKKATAKGKAKTGAAWRKKLAAVSPESRSDTLLGLVRDEIAAVLGYQGQELPDGPLSDLGFDSFTSVTVSNRMRVLTGFRDLPVTLALDYDTPQALVQYLLDRINAEPETEIELDQDVAEEETVSGTNGHQNGHQNGTQNGHSNGHANGASTNGDATDGIDPEEFRGLSTLHRRLCRLEQYTAAADLLASAALAMPTFPSNGRKLLDYVADPHRLATGPEVSPGNDAPLPVVFIAPFFPRIKIGGISLSVYSAVAASLNGKRDVFELPHPEGQYVPEDLDTLAELHVSTIEQQFGDRPGIILAGYSAGGTVAYAVASKLAQAGKHPRLAGFVLVDTYLTMTGRGDPDWLNALPAEALVSRLGGPDSTGESLVGDLDLALAKVGGYFRTLRDWDQELYPLPDALSTLFVRALDPSEKMPKNADIWRPRWQRANHTVEVPGSHLALLDKRYAPAIAVEIEHWAKEQLGV.

The tract at residues 13–422 is adenylation (A) domain; sequence HHAVESRDKV…VGRKKELIIR (410 aa). Residues 531-617 enclose the Carrier 1 domain; sequence AAVEALVLAE…AVRDYLFNRL (87 aa). Residue serine 576 is modified to O-(pantetheine 4'-phosphoryl)serine. The Ketosynthase family 3 (KS3) domain maps to 638 to 1066; the sequence is AEPIAIISMA…GTNAHIILEQ (429 aa). Catalysis depends on for beta-ketoacyl synthase activity residues cysteine 810, histidine 945, and histidine 988. The Malonyl-CoA:ACP transacylase (MAT) domain maps to 1204-1462; sequence PIFSRAFKEA…GPSAVLSPHV (259 aa). The N-terminal hotdog fold stretch occupies residues 1549–1688; it reads HGVLYRTTSI…GTLKLISLPP (140 aa). The region spanning 1549–1847 is the PKS/mFAS DH domain; sequence HGVLYRTTSI…LRAVQPPVVE (299 aa). The dehydratase (DH) domain stretch occupies residues 1561-1842; sequence TNDIICAGFV…ISEVMLRAVQ (282 aa). Histidine 1581 functions as the Proton acceptor; for dehydratase activity in the catalytic mechanism. The interval 1703-1847 is C-terminal hotdog fold; it reads NSEVDVSKAY…LRAVQPPVVE (145 aa). The active-site Proton donor; for dehydratase activity is aspartate 1764. The Ketoreductase (KR) domain maps to 2008–2186; the sequence is GTVLITGGTG…AVSLAWGPWA (179 aa). In terms of domain architecture, Carrier 2 spans 2277–2354; sequence SRSDTLLGLV…ALVQYLLDRI (78 aa). Position 2313 is an O-(pantetheine 4'-phosphoryl)serine (serine 2313). Residues 2361-2373 are compositionally biased toward acidic residues; it reads EIELDQDVAEEET. The tract at residues 2361-2412 is disordered; that stretch reads EIELDQDVAEEETVSGTNGHQNGHQNGTQNGHSNGHANGASTNGDATDGIDP. Residues 2375–2396 show a composition bias toward low complexity; that stretch reads SGTNGHQNGHQNGTQNGHSNGH. Residues 2497–2711 are thioester reductase (TE) domain; the sequence is SLSVYSAVAA…AIAVEIEHWA (215 aa).

It in the N-terminal section; belongs to the NRP synthetase family. Pantetheine 4'-phosphate is required as a cofactor.

Its function is as follows. PKS-NRPS hybrid synthetase that, alone, is sufficient to produce naringenin chalcone, the direct precursor of naringenin, by using p-coumaric acid (p-CA) or p-hydroxybenzoic acid (p-HBA) with the involvement of malonyl-CoA molecules. The adenylation (A) domain activates p-CA or p-HBA as adenylates, which are transferred to the thiol group of the pantetheinyl residue of the T domain, and further transferred to the adjacent PKS portion of fnsA. Besides p-CA and p-HBA, the A domain is also able to activate other substrates such as cinnamic acid and salicyclic acid. Within the PKS portion of fnsA, p-CA and p-HBA act as starter units for respectively three or four malonyl-CoA molecules for elongation by the AT and KS domains of fnsA. Afterwards, naringenin chalcone is cyclized through Claisen condensation and thereby released either spontaneously or catalyzed by the TE domain. Finally, naringenin chalcone is converted to naringenin spontaneously or by a chalcone isomerase. In Pestalotiopsis fici (strain W106-1 / CGMCC3.15140), this protein is Naringenin synthase.